Consider the following 409-residue polypeptide: Arginine deiminase (409 aa).

Cys-399 functions as the Amidino-cysteine intermediate in the catalytic mechanism.

This sequence belongs to the arginine deiminase family.

It localises to the cytoplasm. The enzyme catalyses L-arginine + H2O = L-citrulline + NH4(+). It functions in the pathway amino-acid degradation; L-arginine degradation via ADI pathway; carbamoyl phosphate from L-arginine: step 1/2. In Borreliella afzelii (strain PKo) (Borrelia afzelii), this protein is Arginine deiminase.